Reading from the N-terminus, the 369-residue chain is Protein disulfide-isomerase erp38 (369 aa).

The N-terminal stretch at 1–18 (MVLLKSLVVASLAAAVAA) is a signal peptide. 2 consecutive Thioredoxin domains span residues 19 to 130 (KSAV…EKTG) and 131 to 251 (VKAR…EKAG). Residues Cys-50, Cys-53, Cys-170, and Cys-173 each act as nucleophile in the active site. 2 cysteine pairs are disulfide-bonded: Cys-50/Cys-53 and Cys-170/Cys-173. Residues 366–369 (KEEL) carry the Prevents secretion from ER motif.

It belongs to the protein disulfide isomerase family.

The protein resides in the endoplasmic reticulum lumen. The enzyme catalyses Catalyzes the rearrangement of -S-S- bonds in proteins.. In Neurospora crassa (strain ATCC 24698 / 74-OR23-1A / CBS 708.71 / DSM 1257 / FGSC 987), this protein is Protein disulfide-isomerase erp38 (erp38).